The following is a 151-amino-acid chain: Peptide methionine sulfoxide reductase MsrB (151 aa).

The MsrB domain occupies 5 to 127 (KEERLKQLTR…NSAALRFVPK (123 aa)). Residue Cys-116 is the Nucleophile of the active site.

Belongs to the MsrB Met sulfoxide reductase family.

It catalyses the reaction L-methionyl-[protein] + [thioredoxin]-disulfide + H2O = L-methionyl-(R)-S-oxide-[protein] + [thioredoxin]-dithiol. This is Peptide methionine sulfoxide reductase MsrB from Bacillus licheniformis (strain ATCC 14580 / DSM 13 / JCM 2505 / CCUG 7422 / NBRC 12200 / NCIMB 9375 / NCTC 10341 / NRRL NRS-1264 / Gibson 46).